The primary structure comprises 244 residues: 3-deoxy-manno-octulosonate cytidylyltransferase (244 aa).

The protein belongs to the KdsB family.

The protein localises to the cytoplasm. The enzyme catalyses 3-deoxy-alpha-D-manno-oct-2-ulosonate + CTP = CMP-3-deoxy-beta-D-manno-octulosonate + diphosphate. It participates in nucleotide-sugar biosynthesis; CMP-3-deoxy-D-manno-octulosonate biosynthesis; CMP-3-deoxy-D-manno-octulosonate from 3-deoxy-D-manno-octulosonate and CTP: step 1/1. Its pathway is bacterial outer membrane biogenesis; lipopolysaccharide biosynthesis. In terms of biological role, activates KDO (a required 8-carbon sugar) for incorporation into bacterial lipopolysaccharide in Gram-negative bacteria. The chain is 3-deoxy-manno-octulosonate cytidylyltransferase from Dichelobacter nodosus (strain VCS1703A).